A 66-amino-acid chain; its full sequence is MNWLLRKCSKCGRYTLSRDRCPYCGGELIVPHPPRFSPIDKYVEYRLEEKLSKGIIKLDEKPPYKP.

This sequence belongs to the NOP10 family.

Functionally, involved in ribosome biogenesis; more specifically in 18S rRNA pseudouridylation and in cleavage of pre-rRNA. The sequence is that of Ribosome biogenesis protein Nop10 from Desulfurococcus amylolyticus (strain DSM 18924 / JCM 16383 / VKM B-2413 / 1221n) (Desulfurococcus kamchatkensis).